A 356-amino-acid chain; its full sequence is Stomatin-like protein 2, mitochondrial (356 aa).

A mitochondrion-targeting transit peptide spans 1–28; that stretch reads MLARAARGTGALLLRGSLLASGRAPRRA. Residue S17 is modified to Phosphoserine; by PKC/PRKCZ. Y124 bears the Phosphotyrosine mark. K145 is modified (N6-acetyllysine; alternate). Position 145 is an N6-succinyllysine; alternate (K145). Positions 215–252 form a coiled coil; that stretch reads INVAEGKKQAQILASEAEKAEQINQAAGEASAVLAKAK. K233 carries the N6-acetyllysine modification. The disordered stretch occupies residues 321–356; that stretch reads KAPVPGTPDSLSSGSSRDVQGTDASLDEELDRVKMS. Residue T327 is modified to Phosphothreonine. A compositionally biased stretch (polar residues) spans 329–343; the sequence is DSLSSGSSRDVQGTD. The residue at position 330 (S330) is a Phosphoserine.

It belongs to the band 7/mec-2 family. As to quaternary structure, forms homooligomers. Interacts with MFN2; may form heterooligomers. Interacts with CACNA2D2. Interacts with PHB1 and PHB2; recruits them to cardiolipin-enriched mitochondrial membranes and stabilizes them. In terms of processing, hyperphosphorylated at Ser-17 in some patients with monoclonal gammopathy of undetermined significance (MGUS), multiple myeloma (MM) and Waldenstrom macroglobulinemia due to impaired dephosphorylation by PP2A. Ubiquitously expressed at low levels. Expressed in lymphoid tissues (at protein level).

The protein resides in the cell membrane. Its subcellular location is the mitochondrion. It localises to the mitochondrion inner membrane. The protein localises to the mitochondrion intermembrane space. It is found in the membrane raft. The protein resides in the cytoplasm. Its subcellular location is the cytoskeleton. Its function is as follows. Mitochondrial protein that probably regulates the biogenesis and the activity of mitochondria. Stimulates cardiolipin biosynthesis, binds cardiolipin-enriched membranes where it recruits and stabilizes some proteins including prohibitin and may therefore act in the organization of functional microdomains in mitochondrial membranes. Through regulation of the mitochondrial function may play a role into several biological processes including cell migration, cell proliferation, T-cell activation, calcium homeostasis and cellular response to stress. May play a role in calcium homeostasis through negative regulation of calcium efflux from mitochondria. Required for mitochondrial hyperfusion a pro-survival cellular response to stress which results in increased ATP production by mitochondria. May also regulate the organization of functional domains at the plasma membrane and play a role in T-cell activation through association with the T-cell receptor signaling complex and its regulation. The polypeptide is Stomatin-like protein 2, mitochondrial (STOML2) (Homo sapiens (Human)).